The following is an 892-amino-acid chain: Translation initiation factor IF-2 (892 aa).

Residues 66 to 305 (TRSTLNIPGT…SLQQGFQKPA (240 aa)) form a disordered region. Polar residues predominate over residues 68–82 (STLNIPGTGGKSKSV). Basic and acidic residues-rich tracts occupy residues 93-159 (VKRD…KDKV) and 166-216 (DMTK…EENK). Residues 254–269 (GRGRNAKAARPAKKGK) show a composition bias toward basic residues. A compositionally biased stretch (basic and acidic residues) spans 270-282 (HAESKADREEARA). The tr-type G domain maps to 391 to 560 (PRAPVVTIMG…LLQAEVLELK (170 aa)). The interval 400-407 (GHVDHGKT) is G1. 400–407 (GHVDHGKT) contacts GTP. The segment at 425 to 429 (GITQH) is G2. Residues 446–449 (DTPG) form a G3 region. GTP-binding positions include 446–450 (DTPGH) and 500–503 (NKID). The interval 500–503 (NKID) is G4. The interval 536–538 (SAK) is G5.

It belongs to the TRAFAC class translation factor GTPase superfamily. Classic translation factor GTPase family. IF-2 subfamily.

Its subcellular location is the cytoplasm. In terms of biological role, one of the essential components for the initiation of protein synthesis. Protects formylmethionyl-tRNA from spontaneous hydrolysis and promotes its binding to the 30S ribosomal subunits. Also involved in the hydrolysis of GTP during the formation of the 70S ribosomal complex. In Salmonella typhi, this protein is Translation initiation factor IF-2.